The following is a 590-amino-acid chain: 4-oxocyclohex-2-ene-1-carboxylate 5-dehydrogenase (590 aa).

This sequence belongs to the FAD-dependent oxidoreductase 2 family. As to quaternary structure, forms multimers. FAD is required as a cofactor.

It catalyses the reaction 4-oxocyclohex-2-ene-1-carboxylate + NAD(+) = 4-oxocyclohexa-2,5-diene-1-carboxylate + NADH + H(+). Desaturase involved in a cyclohexanecarboxylate (CHCA) degradation pathway. Probably catalyzes the conversion of 4-oxocyclohexenecarboxylate to 4-oxocyclohex-2,5-dienecarboxylate, which is spontaneously isomerized to 4-hydroxybenzoate (4-HBA). This is 4-oxocyclohex-2-ene-1-carboxylate 5-dehydrogenase from Sinomonas cyclohexanicum (Corynebacterium cyclohexanicum).